A 342-amino-acid chain; its full sequence is MTNLTLALDAMGGDYGPRITVPAALQALRLYSFLNFYLVGNKTDIEKYLSQVESDVLRRIEIIHTTEVVTMSDRPAHALRNRKQSSMRLAIELVRDGKAQACLSAGNTGALMAMSKVLLKTLPGIDRPALVSCLPAVNKTPVYLLDLGANVSCCSETLFQFAVMGSVLCEAVDKNCSPKVALLNVGIEEIKGNDQVQQAGQLLQQSPQINYTGFIEGNDLFSGRVDVIVCDGFVGNITLKTSEGIARLLVHQLEKGLTKGFFVRLMAKMIAPRINSVLNQMNPDHYNGASLIGLRGIVVKSHGSADESAYLQAISLAVTEAQRRLPQMIEERLESILLDINN.

The protein belongs to the PlsX family. Homodimer. Probably interacts with PlsY.

The protein resides in the cytoplasm. The enzyme catalyses a fatty acyl-[ACP] + phosphate = an acyl phosphate + holo-[ACP]. It participates in lipid metabolism; phospholipid metabolism. In terms of biological role, catalyzes the reversible formation of acyl-phosphate (acyl-PO(4)) from acyl-[acyl-carrier-protein] (acyl-ACP). This enzyme utilizes acyl-ACP as fatty acyl donor, but not acyl-CoA. This is Phosphate acyltransferase from Shewanella sediminis (strain HAW-EB3).